The following is a 539-amino-acid chain: Glucose-6-phosphate isomerase (539 aa).

The Proton donor role is filled by E340. Active-site residues include H371 and K500.

This sequence belongs to the GPI family.

It is found in the cytoplasm. It catalyses the reaction alpha-D-glucose 6-phosphate = beta-D-fructose 6-phosphate. It functions in the pathway carbohydrate biosynthesis; gluconeogenesis. The protein operates within carbohydrate degradation; glycolysis; D-glyceraldehyde 3-phosphate and glycerone phosphate from D-glucose: step 2/4. Catalyzes the reversible isomerization of glucose-6-phosphate to fructose-6-phosphate. This is Glucose-6-phosphate isomerase from Ruegeria pomeroyi (strain ATCC 700808 / DSM 15171 / DSS-3) (Silicibacter pomeroyi).